The sequence spans 142 residues: Hemoglobin subunit alpha (142 aa).

Positions 2 to 142 constitute a Globin domain; it reads VLSAADKTNV…LSTVLTSKYR (141 aa). Ser4 is subject to Phosphoserine. Lys8 carries the post-translational modification N6-succinyllysine. A Phosphothreonine modification is found at Thr9. The residue at position 12 (Lys12) is an N6-succinyllysine. The residue at position 17 (Lys17) is an N6-acetyllysine; alternate. N6-succinyllysine; alternate is present on Lys17. Residue Tyr25 is modified to Phosphotyrosine. Ser36 is modified (phosphoserine). Position 41 is an N6-succinyllysine (Lys41). Ser50 is modified (phosphoserine). O2 is bound at residue Gln59. His88 contacts heme b. Phosphothreonine is present on Thr109. Position 125 is a phosphoserine (Ser125). 2 positions are modified to phosphothreonine: Thr135 and Thr138. Ser139 carries the phosphoserine modification.

The protein belongs to the globin family. Heterotetramer of two alpha chains and two beta chains. As to expression, red blood cells.

In terms of biological role, involved in oxygen transport from the lung to the various peripheral tissues. Functionally, hemopressin acts as an antagonist peptide of the cannabinoid receptor CNR1. Hemopressin-binding efficiently blocks cannabinoid receptor CNR1 and subsequent signaling. The sequence is that of Hemoglobin subunit alpha (HBA) from Monodelphis domestica (Gray short-tailed opossum).